An 862-amino-acid polypeptide reads, in one-letter code: Probable disease resistance protein At5g43740 (862 aa).

Positions 24–61 form a coiled coil; sequence RNYIHMMESNLDALQKTMEELKNGRDDLLGRVSIEEDK. An NB-ARC domain is found at 135–438; it reads MVAQEIIHKV…CEGFINPNRY (304 aa). 178 to 185 contacts ATP; the sequence is GMGGVGKT. 4 LRR repeats span residues 511-532, 533-555, 558-580, and 582-604; these read IVRT…SKCP, NLST…FFRF, KLVV…ISNL, and SLQY…KKLR.

It belongs to the disease resistance NB-LRR family.

Probable disease resistance protein. The chain is Probable disease resistance protein At5g43740 from Arabidopsis thaliana (Mouse-ear cress).